The chain runs to 134 residues: Spermadhesin-1 (134 aa).

The signal sequence occupies residues 1–20; sequence MKLSSVIPWALLLSTATVDS. 2 disulfide bridges follow: Cys30–Cys51 and Cys74–Cys95. One can recognise a CUB domain in the interval 30-131; it reads CGGILKEESG…SFYEVLYFQD (102 aa).

This sequence belongs to the spermadhesin family. In terms of tissue distribution, seminal vesicle tissue, ampulla and weakly in tissue of epididymis.

Its subcellular location is the secreted. Stimulates cell division and progesterone secretion of bovine granulosa cells in vitro in a potent and dose dependent manner. This protein appears to be a potent growth factor with effects on ovarian granulosa cells. In Bos taurus (Bovine), this protein is Spermadhesin-1 (SPADH1).